Here is a 244-residue protein sequence, read N- to C-terminus: 2,3-bisphosphoglycerate-dependent phosphoglycerate mutase (244 aa).

Residues 8-15 (RHGESNWN), 21-22 (TG), R60, 87-90 (ERHY), K98, 114-115 (RR), and 181-182 (GN) contribute to the substrate site. Catalysis depends on H9, which acts as the Tele-phosphohistidine intermediate. Residue E87 is the Proton donor/acceptor of the active site.

Belongs to the phosphoglycerate mutase family. BPG-dependent PGAM subfamily.

The enzyme catalyses (2R)-2-phosphoglycerate = (2R)-3-phosphoglycerate. The protein operates within carbohydrate degradation; glycolysis; pyruvate from D-glyceraldehyde 3-phosphate: step 3/5. Functionally, catalyzes the interconversion of 2-phosphoglycerate and 3-phosphoglycerate. The chain is 2,3-bisphosphoglycerate-dependent phosphoglycerate mutase from Frankia alni (strain DSM 45986 / CECT 9034 / ACN14a).